Here is a 526-residue protein sequence, read N- to C-terminus: Bifunctional purine biosynthesis protein PurH (526 aa).

One can recognise an MGS-like domain in the interval 1–149; the sequence is MLHSLPIRRA…KNHEAVTVVV (149 aa).

This sequence belongs to the PurH family.

The catalysed reaction is (6R)-10-formyltetrahydrofolate + 5-amino-1-(5-phospho-beta-D-ribosyl)imidazole-4-carboxamide = 5-formamido-1-(5-phospho-D-ribosyl)imidazole-4-carboxamide + (6S)-5,6,7,8-tetrahydrofolate. The enzyme catalyses IMP + H2O = 5-formamido-1-(5-phospho-D-ribosyl)imidazole-4-carboxamide. Its pathway is purine metabolism; IMP biosynthesis via de novo pathway; 5-formamido-1-(5-phospho-D-ribosyl)imidazole-4-carboxamide from 5-amino-1-(5-phospho-D-ribosyl)imidazole-4-carboxamide (10-formyl THF route): step 1/1. It participates in purine metabolism; IMP biosynthesis via de novo pathway; IMP from 5-formamido-1-(5-phospho-D-ribosyl)imidazole-4-carboxamide: step 1/1. This is Bifunctional purine biosynthesis protein PurH from Rhodospirillum rubrum (strain ATCC 11170 / ATH 1.1.1 / DSM 467 / LMG 4362 / NCIMB 8255 / S1).